The following is a 237-amino-acid chain: 1-(5-phosphoribosyl)-5-[(5-phosphoribosylamino)methylideneamino] imidazole-4-carboxamide isomerase (237 aa).

Catalysis depends on Asp-8, which acts as the Proton acceptor. Asp-129 functions as the Proton donor in the catalytic mechanism.

It belongs to the HisA/HisF family.

The protein localises to the cytoplasm. The catalysed reaction is 1-(5-phospho-beta-D-ribosyl)-5-[(5-phospho-beta-D-ribosylamino)methylideneamino]imidazole-4-carboxamide = 5-[(5-phospho-1-deoxy-D-ribulos-1-ylimino)methylamino]-1-(5-phospho-beta-D-ribosyl)imidazole-4-carboxamide. Its pathway is amino-acid biosynthesis; L-histidine biosynthesis; L-histidine from 5-phospho-alpha-D-ribose 1-diphosphate: step 4/9. This is 1-(5-phosphoribosyl)-5-[(5-phosphoribosylamino)methylideneamino] imidazole-4-carboxamide isomerase from Acetivibrio thermocellus (strain ATCC 27405 / DSM 1237 / JCM 9322 / NBRC 103400 / NCIMB 10682 / NRRL B-4536 / VPI 7372) (Clostridium thermocellum).